An 826-amino-acid chain; its full sequence is Leucine--tRNA ligase (826 aa).

Residues 41-51 (PYPSGKLHMGH) carry the 'HIGH' region motif. Positions 586–590 (KMSKS) match the 'KMSKS' region motif. ATP is bound at residue K589.

It belongs to the class-I aminoacyl-tRNA synthetase family.

It localises to the cytoplasm. The catalysed reaction is tRNA(Leu) + L-leucine + ATP = L-leucyl-tRNA(Leu) + AMP + diphosphate. This Natranaerobius thermophilus (strain ATCC BAA-1301 / DSM 18059 / JW/NM-WN-LF) protein is Leucine--tRNA ligase.